The sequence spans 405 residues: MENIMTLPKIKQVRAWFTGGATAEKGAGGGDYHDQGANHWIDDHIATPMSKYRDYEQSRQSFGINVLGTLVVEVEAENGQTGFAVSTAGEMGCFIVEKHLNRFIEGKCVSDIKLIHDQMLSATLYYSGSGGLVMNTISCVDLALWDLFGKVVGLPVYKLLGGAVRDEIQFYATGARPDLAKEMGFIGGKMPTHWGPHDGDAGIRKDAAMVADMREKCGEDFWLMLDCWMSQDVNYATKLAHACAPYNLKWIEECLPPQQYEGYRELKRNAPVGMMVTSGEHHGTLQSFRTLSETGIDIMQPDVGWCGGLTTLVEIAAIAKSRGQLVVPHGSSVYSHHAVITFTNTPFSEFLMTSPDCSTMRPQFDPILLNEPVPVNGRIHKSVLDKPGFGVELNRDCNLKRPYSH.

The substrate site is built by histidine 33 and arginine 59. The Mg(2+) site is built by aspartate 226, glutamate 252, and glutamate 280. The Proton acceptor role is filled by histidine 329. A substrate-binding site is contributed by glutamate 349.

This sequence belongs to the mandelate racemase/muconate lactonizing enzyme family. RhamD subfamily. Homooctamer; tetramer of dimers. Requires Mg(2+) as cofactor.

The catalysed reaction is L-rhamnonate = 2-dehydro-3-deoxy-L-rhamnonate + H2O. Catalyzes the dehydration of L-rhamnonate to 2-keto-3-deoxy-L-rhamnonate (KDR). The chain is L-rhamnonate dehydratase from Escherichia coli O9:H4 (strain HS).